Here is an 806-residue protein sequence, read N- to C-terminus: Ribonucleoside-diphosphate reductase large subunit-like protein (806 aa).

This sequence belongs to the ribonucleoside diphosphate reductase large chain family.

It is found in the virion. It localises to the host cytoplasm. Functionally, does not possess a ribonucleotide reductase activity. Betaherpesviruses probably use another strategy to expand the dNTP pool in a quiescent host cell. This Human herpesvirus 7 (strain JI) (HHV-7) protein is Ribonucleoside-diphosphate reductase large subunit-like protein.